The sequence spans 775 residues: 1,4-alpha-glucan branching enzyme GlgB (775 aa).

Asp431 acts as the Nucleophile in catalysis. Glu484 acts as the Proton donor in catalysis.

This sequence belongs to the glycosyl hydrolase 13 family. GlgB subfamily. As to quaternary structure, monomer.

It catalyses the reaction Transfers a segment of a (1-&gt;4)-alpha-D-glucan chain to a primary hydroxy group in a similar glucan chain.. The protein operates within glycan biosynthesis; glycogen biosynthesis. Functionally, catalyzes the formation of the alpha-1,6-glucosidic linkages in glycogen by scission of a 1,4-alpha-linked oligosaccharide from growing alpha-1,4-glucan chains and the subsequent attachment of the oligosaccharide to the alpha-1,6 position. This is 1,4-alpha-glucan branching enzyme GlgB from Parasynechococcus marenigrum (strain WH8102).